A 557-amino-acid polypeptide reads, in one-letter code: Interferon alpha/beta receptor 1 (557 aa).

The first 27 residues, 1–27 (MMVVLLGATTLVLVAVAPWVLSAAAGG), serve as a signal peptide directing secretion. Over 28–436 (KNLKSPQKVE…EKTKPGNTSK (409 aa)) the chain is Extracellular. Fibronectin type-III domains are found at residues 32-126 (SPQK…FRKA), 127-227 (QIGP…TVEN), 231-329 (PPEN…TEIQ), and 331-432 (FLLP…TKPG). 6 N-linked (GlcNAc...) asparagine glycosylation sites follow: Asn50, Asn58, Asn81, Asn88, Asn110, and Asn172. Residues Cys79 and Cys87 are joined by a disulfide bond. A disulfide bridge links Cys199 with Cys220. An N-linked (GlcNAc...) asparagine glycan is attached at Asn254. A disulfide bond links Cys283 and Cys291. N-linked (GlcNAc...) asparagine glycans are attached at residues Asn313, Asn314, Asn376, Asn416, and Asn433. A disulfide bond links Cys403 and Cys426. A helical membrane pass occupies residues 437-457 (IWLIVGICIALFALPFVIYAA). At 458 to 557 (KVFLRCINYV…TSEELQQDFV (100 aa)) the chain is on the cytoplasmic side. Cys463 carries the S-palmitoyl cysteine lipid modification. 2 positions are modified to phosphotyrosine; by TYK2: Tyr466 and Tyr481. Residues 491–500 (LLSTSEEQIE) form an important for interaction with TYK2 region. Ser495 carries the phosphoserine modification. Residues Lys501, Lys525, and Lys526 each participate in a glycyl lysine isopeptide (Lys-Gly) (interchain with G-Cter in ubiquitin) cross-link. Residues 516–557 (ETNQTDEDHKKYSSQTSQDSGNYSNEDESESKTSEELQQDFV) form a disordered region. Residues 528–539 (SSQTSQDSGNYS) are compositionally biased toward polar residues. Ser535 carries the phosphoserine modification.

This sequence belongs to the type II cytokine receptor family. As to quaternary structure, heterodimer with IFNAR2; forming the receptor for type I interferon. Interacts with TYK2. Interacts with STAT1 and STAT2; the interaction requires its phosphorylation at Tyr-466. Interacts (serine-phosphorylated form) with FBXW11, the substrate recognition component of a SCF (SKP1-CUL1-F-box protein) E3 ubiquitin-protein ligase complex. Interacts with SHMT2; this promotes interaction with ABRAXAS2 and the BRISC complex. Interacts with TRIM10; this interaction prevents association between IFNAR1 and TYK2. Post-translationally, ubiquitinated, leading to its internalization and degradation. Polyubiquitinated via 'Lys-48'-linked and 'Lys-63'-linked ubiquitin chains, leading to receptor internalization and lysosomal degradation. The 'Lys-63'-linked ubiquitin chains are cleaved off by the BRISC complex. In terms of processing, phosphorylated on tyrosine residues in response to interferon-binding: phosphorylation by TYK2 tyrosine kinase creates docking sites for STAT proteins. Phosphorylated on serine residues in response to interferon binding; this promotes interaction with FBXW11 and ubiquitination. Palmitoylation at Cys-463 is required for the activation of STAT1 and STAT2. In terms of tissue distribution, IFN receptors are present in all tissues and even on the surface of most IFN-resistant cells. Isoform 1, isoform 2 and isoform 3 are expressed in the IFN-alpha sensitive myeloma cell line U266B1. Isoform 2 and isoform 3 are expressed in the IFN-alpha resistant myeloma cell line U266R. Isoform 1 is not expressed in IFN-alpha resistant myeloma cell line U266R.

The protein localises to the cell membrane. It localises to the late endosome. Its subcellular location is the lysosome. Together with IFNAR2, forms the heterodimeric receptor for type I interferons (including interferons alpha, beta, epsilon, omega and kappa). Type I interferon binding activates the JAK-STAT signaling cascade, resulting in transcriptional activation or repression of interferon-regulated genes that encode the effectors of the interferon response. Mechanistically, type I interferon-binding brings the IFNAR1 and IFNAR2 subunits into close proximity with one another, driving their associated Janus kinases (JAKs) (TYK2 bound to IFNAR1 and JAK1 bound to IFNAR2) to cross-phosphorylate one another. The activated kinases phosphorylate specific tyrosine residues on the intracellular domains of IFNAR1 and IFNAR2, forming docking sites for the STAT transcription factors. STAT proteins are then phosphorylated by the JAKs, promoting their translocation into the nucleus to regulate expression of interferon-regulated genes. Can also act independently of IFNAR2: form an active IFNB1 receptor by itself and activate a signaling cascade that does not involve activation of the JAK-STAT pathway. The sequence is that of Interferon alpha/beta receptor 1 (IFNAR1) from Homo sapiens (Human).